Here is a 145-residue protein sequence, read N- to C-terminus: Protein SprT-like (145 aa).

One can recognise a SprT-like domain in the interval 4 to 141 (TDYVKEVSRQ…CGNCHGKLRH (138 aa)). His-64 serves as a coordination point for Zn(2+). Glu-65 is an active-site residue. His-68 serves as a coordination point for Zn(2+).

This sequence belongs to the SprT family. Zn(2+) serves as cofactor.

The protein localises to the cytoplasm. The protein is Protein SprT-like of Streptococcus mutans serotype c (strain ATCC 700610 / UA159).